The following is a 423-amino-acid chain: Serine--tRNA ligase (423 aa).

L-serine is bound at residue 228–230 (TSE). 259 to 261 (RLE) contacts ATP. Residue Glu-282 coordinates L-serine. 346 to 349 (EISS) provides a ligand contact to ATP. Position 384 (Ser-384) interacts with L-serine.

It belongs to the class-II aminoacyl-tRNA synthetase family. Type-1 seryl-tRNA synthetase subfamily. Homodimer. The tRNA molecule binds across the dimer.

It is found in the cytoplasm. It carries out the reaction tRNA(Ser) + L-serine + ATP = L-seryl-tRNA(Ser) + AMP + diphosphate + H(+). It catalyses the reaction tRNA(Sec) + L-serine + ATP = L-seryl-tRNA(Sec) + AMP + diphosphate + H(+). Its pathway is aminoacyl-tRNA biosynthesis; selenocysteinyl-tRNA(Sec) biosynthesis; L-seryl-tRNA(Sec) from L-serine and tRNA(Sec): step 1/1. In terms of biological role, catalyzes the attachment of serine to tRNA(Ser). Is also able to aminoacylate tRNA(Sec) with serine, to form the misacylated tRNA L-seryl-tRNA(Sec), which will be further converted into selenocysteinyl-tRNA(Sec). The chain is Serine--tRNA ligase from Ehrlichia canis (strain Jake).